Here is a 361-residue protein sequence, read N- to C-terminus: UDP-N-acetylglucosamine--N-acetylmuramyl-(pentapeptide) pyrophosphoryl-undecaprenol N-acetylglucosamine transferase (361 aa).

UDP-N-acetyl-alpha-D-glucosamine is bound by residues 13–15 (TGG), Asn-125, Arg-167, Ser-196, Ile-251, 270–275 (ALTVTE), and Gln-296.

This sequence belongs to the glycosyltransferase 28 family. MurG subfamily.

The protein resides in the cell inner membrane. It carries out the reaction di-trans,octa-cis-undecaprenyl diphospho-N-acetyl-alpha-D-muramoyl-L-alanyl-D-glutamyl-meso-2,6-diaminopimeloyl-D-alanyl-D-alanine + UDP-N-acetyl-alpha-D-glucosamine = di-trans,octa-cis-undecaprenyl diphospho-[N-acetyl-alpha-D-glucosaminyl-(1-&gt;4)]-N-acetyl-alpha-D-muramoyl-L-alanyl-D-glutamyl-meso-2,6-diaminopimeloyl-D-alanyl-D-alanine + UDP + H(+). The protein operates within cell wall biogenesis; peptidoglycan biosynthesis. Its function is as follows. Cell wall formation. Catalyzes the transfer of a GlcNAc subunit on undecaprenyl-pyrophosphoryl-MurNAc-pentapeptide (lipid intermediate I) to form undecaprenyl-pyrophosphoryl-MurNAc-(pentapeptide)GlcNAc (lipid intermediate II). This is UDP-N-acetylglucosamine--N-acetylmuramyl-(pentapeptide) pyrophosphoryl-undecaprenol N-acetylglucosamine transferase from Psychrobacter cryohalolentis (strain ATCC BAA-1226 / DSM 17306 / VKM B-2378 / K5).